A 908-amino-acid chain; its full sequence is DNA mismatch repair protein MutS (908 aa).

Position 662–669 (662–669) interacts with ATP; it reads GPNMGGKS.

This sequence belongs to the DNA mismatch repair MutS family.

In terms of biological role, this protein is involved in the repair of mismatches in DNA. It is possible that it carries out the mismatch recognition step. This protein has a weak ATPase activity. The sequence is that of DNA mismatch repair protein MutS from Rhizobium johnstonii (strain DSM 114642 / LMG 32736 / 3841) (Rhizobium leguminosarum bv. viciae).